The chain runs to 114 residues: Reprimo-like protein (114 aa).

The chain crosses the membrane as a helical span at residues Val-61–Leu-81.

It belongs to the reprimo family.

The protein resides in the membrane. The polypeptide is Reprimo-like protein (rprml) (Danio rerio (Zebrafish)).